We begin with the raw amino-acid sequence, 457 residues long: Glycerol-3-phosphate acyltransferase 3 (457 aa).

The helical transmembrane segment at 14 to 34 (WLTLVGSLILLPSAFGLSLGI) threads the bilayer. 2 positions are modified to phosphoserine: Ser-68 and Ser-77. Helical transmembrane passes span 137–157 (ISPK…CFLL) and 161–181 (VTLA…VGQL). The HXXXXD motif motif lies at 229-234 (HTSPID). The interval 429 to 457 (GNGSPSLALDSSTVDNHGSPEPAFRSESL) is disordered. A compositionally biased stretch (polar residues) spans 431-444 (GSPSLALDSSTVDN).

It belongs to the 1-acyl-sn-glycerol-3-phosphate acyltransferase family.

The protein localises to the endoplasmic reticulum membrane. It carries out the reaction sn-glycerol 3-phosphate + an acyl-CoA = a 1-acyl-sn-glycero-3-phosphate + CoA. The enzyme catalyses a 1-acyl-sn-glycero-3-phosphate + an acyl-CoA = a 1,2-diacyl-sn-glycero-3-phosphate + CoA. The catalysed reaction is dodecanoyl-CoA + sn-glycerol 3-phosphate = 1-dodecanoyl-sn-glycerol 3-phosphate + CoA. It catalyses the reaction sn-glycerol 3-phosphate + hexadecanoyl-CoA = 1-hexadecanoyl-sn-glycero-3-phosphate + CoA. It carries out the reaction sn-glycerol 3-phosphate + (9Z)-octadecenoyl-CoA = 1-(9Z-octadecenoyl)-sn-glycero-3-phosphate + CoA. The enzyme catalyses (9Z,12Z)-octadecadienoyl-CoA + sn-glycerol 3-phosphate = 1-(9Z,12Z)-octadecadienoyl-sn-glycero-3-phosphate + CoA. The catalysed reaction is 1-tetradecanoyl-sn-glycerol 3-phosphate + (9Z)-octadecenoyl-CoA = 1-tetradecanoyl-2-(9Z)-octadecenoyl-sn-glycero-3-phosphate + CoA. It catalyses the reaction 1-hexadecanoyl-sn-glycero-3-phosphate + (9Z)-octadecenoyl-CoA = 1-hexadecanoyl-2-(9Z-octadecenoyl)-sn-glycero-3-phosphate + CoA. It carries out the reaction 1-(9Z-octadecenoyl)-sn-glycero-3-phosphate + (9Z)-octadecenoyl-CoA = 1,2-di-(9Z-octadecenoyl)-sn-glycero-3-phosphate + CoA. The enzyme catalyses 1-(6Z,9Z,12Z-octadecatrienoyl)-sn-glycero-3-phosphate + (9Z)-octadecenoyl-CoA = (6Z,9Z,12Z)-octadecatrienoyl-2-(9Z)-octadecenoyl-sn-glycero-3-phosphate + CoA. The catalysed reaction is 1-(9Z,12Z,15Z)-octadecatrienoyl-sn-glycero-3-phosphate + (9Z)-octadecenoyl-CoA = 1-(9Z,12Z,15Z)-octadecatrienoyl-2-(9Z)-octadecenoyl-sn-glycero-3-phosphate + CoA. It catalyses the reaction 1-(9Z-octadecenoyl)-sn-glycero-3-phosphate + tetradecanoyl-CoA = 1-(9Z)-octadecenoyl-2-tetradecanoyl-sn-glycero-3-phosphate + CoA. It carries out the reaction 1-(9Z-octadecenoyl)-sn-glycero-3-phosphate + hexadecanoyl-CoA = 1-(9Z)-octadecenoyl-2-hexadecanoyl-sn-glycero-3-phosphate + CoA. The enzyme catalyses 1-(9Z-octadecenoyl)-sn-glycero-3-phosphate + octadecanoyl-CoA = 1-(9Z-octadecenoyl)-2-octadecanoyl-sn-glycero-3-phosphate + CoA. The catalysed reaction is 1-(9Z-octadecenoyl)-sn-glycero-3-phosphate + (9Z,12Z)-octadecadienoyl-CoA = 1-(9Z)-octadecenoyl-2-(9Z,12Z)-octadecadienoyl-sn-glycero-3-phosphate + CoA. It catalyses the reaction 1-(5Z,8Z,11Z,14Z-eicosatetraenoyl)-sn-glycero-3-phosphate + (9Z)-octadecenoyl-CoA = 1-(5Z,8Z,11Z,14Z)-eicosatetraenoyl-2-(9Z)-octadecenoyl-sn-glycero-3-phosphate + CoA. Its pathway is glycerolipid metabolism; triacylglycerol biosynthesis. It functions in the pathway phospholipid metabolism; CDP-diacylglycerol biosynthesis; CDP-diacylglycerol from sn-glycerol 3-phosphate: step 1/3. Functionally, converts glycerol-3-phosphate to 1-acyl-sn-glycerol-3-phosphate (lysophosphatidic acid or LPA) by incorporating an acyl moiety at the sn-1 position of the glycerol backbone. Also converts LPA into 1,2-diacyl-sn-glycerol-3-phosphate (phosphatidic acid or PA) by incorporating an acyl moiety at the sn-2 position of the glycerol backbone. Protects cells against lipotoxicity. The protein is Glycerol-3-phosphate acyltransferase 3 of Rattus norvegicus (Rat).